The following is a 492-amino-acid chain: Fascin-2 (492 aa).

It belongs to the fascin family. Exclusively expressed in the eye, specifically in photoreceptor cells.

Its subcellular location is the cytoplasm. The protein resides in the cytoskeleton. The protein localises to the cell projection. It localises to the stereocilium. In terms of biological role, acts as an actin bundling protein. May play a pivotal role in photoreceptor cell-specific events, such as disk morphogenesis. This Bos taurus (Bovine) protein is Fascin-2 (FSCN2).